A 612-amino-acid chain; its full sequence is Chloride intracellular channel protein 6 (612 aa).

The interval Met1 to Leu373 is disordered. The segment covering Leu34 to Gly51 has biased composition (basic and acidic residues). Ser40 is subject to Phosphoserine. Low complexity predominate over residues Pro84–Gly96. A compositionally biased stretch (polar residues) spans Gln120 to Leu129. The span at Glu140 to Glu153 shows a compositional bias: basic and acidic residues. The span at Ser208–Glu223 shows a compositional bias: low complexity. Composition is skewed to basic and acidic residues over residues Ala240–Ser264 and Glu275–Ser303. A phosphoserine mark is found at Ser264, Ser303, and Ser321. Basic and acidic residues-rich tracts occupy residues Glu325–Ser335 and Glu354–Asn364. Position 368 is a phosphoserine (Ser368). The G-site signature appears at Cys395 to Ser398. The helical transmembrane segment at Phe397 to Val417 threads the bilayer. Residues Asp441–Lys612 enclose the GST C-terminal domain.

This sequence belongs to the chloride channel CLIC family. In terms of assembly, monomer (soluble state). Interacts with dopamine receptors DRD2, DRD3 and DRD4. Post-translationally, phosphorylated. In terms of tissue distribution, predominantly expressed in brain, pituitary and stomach. In adult brain, it is restricted to the choroid plexus, the striatal proliferative subventricular zone and the cerebellum where it colocalizes with the D(3)R in the Purkinje cells of the lobules IX and X.

Its subcellular location is the cytoplasm. The protein localises to the cell membrane. It catalyses the reaction chloride(in) = chloride(out). Channel activity is redox- and pH-regulated. Inhibited by IAA-94. Functionally, in the soluble state, catalyzes glutaredoxin-like thiol disulfide exchange reactions with reduced glutathione as electron donor. Can insert into membranes and form voltage-dependent chloride-selective channels. The channel opens upon membrane depolarization at positive voltages and closes at negative membrane voltages. May play a critical role in water-secreting cells, possibly through the regulation of chloride ion transport. In Rattus norvegicus (Rat), this protein is Chloride intracellular channel protein 6 (Clic6).